We begin with the raw amino-acid sequence, 285 residues long: Diphthine methyl ester synthase (285 aa).

S-adenosyl-L-methionine is bound by residues L9, D84, G87, 112–113 (SI), and L163. S171 carries the post-translational modification Phosphoserine. S-adenosyl-L-methionine is bound by residues V225 and H250.

It belongs to the diphthine synthase family.

The catalysed reaction is 2-[(3S)-amino-3-carboxypropyl]-L-histidyl-[translation elongation factor 2] + 4 S-adenosyl-L-methionine = diphthine methyl ester-[translation elongation factor 2] + 4 S-adenosyl-L-homocysteine + 3 H(+). It participates in protein modification; peptidyl-diphthamide biosynthesis. S-adenosyl-L-methionine-dependent methyltransferase that catalyzes four methylations of the modified target histidine residue in translation elongation factor 2 (EF-2), to form an intermediate called diphthine methyl ester. The four successive methylation reactions represent the second step of diphthamide biosynthesis. The polypeptide is Diphthine methyl ester synthase (DPH5) (Bos taurus (Bovine)).